We begin with the raw amino-acid sequence, 127 residues long: Holo-[acyl-carrier-protein] synthase (127 aa).

Residues aspartate 9 and glutamate 58 each coordinate Mg(2+).

The protein belongs to the P-Pant transferase superfamily. AcpS family. It depends on Mg(2+) as a cofactor.

Its subcellular location is the cytoplasm. The enzyme catalyses apo-[ACP] + CoA = holo-[ACP] + adenosine 3',5'-bisphosphate + H(+). In terms of biological role, transfers the 4'-phosphopantetheine moiety from coenzyme A to a Ser of acyl-carrier-protein. The polypeptide is Holo-[acyl-carrier-protein] synthase (Shewanella sp. (strain W3-18-1)).